The primary structure comprises 214 residues: Ependymin (214 aa).

A signal peptide spans 1–20 (MHTVKLLCVVFSCLCAVAWA). N70 and N93 each carry an N-linked (GlcNAc...) asparagine glycan.

The protein belongs to the ependymin family. Forms disulfide-linked dimers. Binds calcium through the terminal sialic acids.

Its subcellular location is the secreted. Its function is as follows. May play a role in neural plasticity. May be involved during axon regeneration. This is Ependymin (epd) from Notemigonus crysoleucas (Golden shiner).